A 615-amino-acid polypeptide reads, in one-letter code: Chaperone protein HtpG (615 aa).

Positions 1 to 335 (MSAEKQTHGF…APDLPLNVSR (335 aa)) are a; substrate-binding. A b region spans residues 336 to 541 (ELLQDYGPVQ…EDQLGPQMRR (206 aa)). A c region spans residues 542–615 (MLEAAGQPVP…RMQALLSQSV (74 aa)).

Belongs to the heat shock protein 90 family. Homodimer.

It is found in the cytoplasm. In terms of biological role, molecular chaperone. Has ATPase activity. This chain is Chaperone protein HtpG, found in Alcanivorax borkumensis (strain ATCC 700651 / DSM 11573 / NCIMB 13689 / SK2).